The sequence spans 237 residues: Phosphoribosylaminoimidazole-succinocarboxamide synthase (237 aa).

The protein belongs to the SAICAR synthetase family.

It catalyses the reaction 5-amino-1-(5-phospho-D-ribosyl)imidazole-4-carboxylate + L-aspartate + ATP = (2S)-2-[5-amino-1-(5-phospho-beta-D-ribosyl)imidazole-4-carboxamido]succinate + ADP + phosphate + 2 H(+). It participates in purine metabolism; IMP biosynthesis via de novo pathway; 5-amino-1-(5-phospho-D-ribosyl)imidazole-4-carboxamide from 5-amino-1-(5-phospho-D-ribosyl)imidazole-4-carboxylate: step 1/2. This is Phosphoribosylaminoimidazole-succinocarboxamide synthase from Escherichia coli O127:H6 (strain E2348/69 / EPEC).